Consider the following 959-residue polypeptide: Leucine--tRNA ligase (959 aa).

Positions 39–49 (PYVNAYPHLGS) match the 'HIGH' region motif. Positions 637 to 641 (KMSKS) match the 'KMSKS' region motif. Lys-640 is a binding site for ATP. A disordered region spans residues 933–959 (TEEDGGSPRRANALPGRPALYAEKRGG).

The protein belongs to the class-I aminoacyl-tRNA synthetase family.

The protein localises to the cytoplasm. It carries out the reaction tRNA(Leu) + L-leucine + ATP = L-leucyl-tRNA(Leu) + AMP + diphosphate. The protein is Leucine--tRNA ligase of Aeropyrum pernix (strain ATCC 700893 / DSM 11879 / JCM 9820 / NBRC 100138 / K1).